A 241-amino-acid polypeptide reads, in one-letter code: Phosphoribosylaminoimidazole-succinocarboxamide synthase (241 aa).

The protein belongs to the SAICAR synthetase family.

The catalysed reaction is 5-amino-1-(5-phospho-D-ribosyl)imidazole-4-carboxylate + L-aspartate + ATP = (2S)-2-[5-amino-1-(5-phospho-beta-D-ribosyl)imidazole-4-carboxamido]succinate + ADP + phosphate + 2 H(+). It functions in the pathway purine metabolism; IMP biosynthesis via de novo pathway; 5-amino-1-(5-phospho-D-ribosyl)imidazole-4-carboxamide from 5-amino-1-(5-phospho-D-ribosyl)imidazole-4-carboxylate: step 1/2. The chain is Phosphoribosylaminoimidazole-succinocarboxamide synthase from Latilactobacillus sakei subsp. sakei (strain 23K) (Lactobacillus sakei subsp. sakei).